Consider the following 248-residue polypeptide: PF03932 family protein CutC (248 aa).

The protein belongs to the CutC family. Homodimer.

The protein localises to the cytoplasm. This Salmonella enteritidis PT4 (strain P125109) protein is PF03932 family protein CutC.